Consider the following 407-residue polypeptide: Argininosuccinate synthase (407 aa).

Residues 16–24 (AYSGGLDTS) and Ala44 each bind ATP. L-citrulline is bound by residues Tyr96 and Ser101. Gly126 is an ATP binding site. L-aspartate contacts are provided by Thr128, Asn132, and Asp133. Asn132 lines the L-citrulline pocket. Residues Arg136, Ser185, Ser194, Glu270, and Tyr282 each contribute to the L-citrulline site.

Belongs to the argininosuccinate synthase family. Type 1 subfamily. As to quaternary structure, homotetramer.

It localises to the cytoplasm. The enzyme catalyses L-citrulline + L-aspartate + ATP = 2-(N(omega)-L-arginino)succinate + AMP + diphosphate + H(+). Its pathway is amino-acid biosynthesis; L-arginine biosynthesis; L-arginine from L-ornithine and carbamoyl phosphate: step 2/3. This chain is Argininosuccinate synthase, found in Shewanella denitrificans (strain OS217 / ATCC BAA-1090 / DSM 15013).